Here is a 290-residue protein sequence, read N- to C-terminus: Undecaprenyl-diphosphatase 2 (290 aa).

The next 6 helical transmembrane spans lie at 104 to 124, 128 to 148, 174 to 194, 205 to 225, 237 to 257, and 268 to 288; these read WMVI…KDLI, LRNL…FILA, CLAL…GLFL, SFLL…PDAF, QLFV…AWLL, and FALW…FGVL.

It belongs to the UppP family.

It localises to the cell membrane. The catalysed reaction is di-trans,octa-cis-undecaprenyl diphosphate + H2O = di-trans,octa-cis-undecaprenyl phosphate + phosphate + H(+). In terms of biological role, catalyzes the dephosphorylation of undecaprenyl diphosphate (UPP). Confers resistance to bacitracin. This chain is Undecaprenyl-diphosphatase 2, found in Corynebacterium jeikeium (strain K411).